We begin with the raw amino-acid sequence, 110 residues long: Protein YcgL (110 aa).

Residues 14-98 enclose the YcgL domain; it reads MFCVIYRSSK…PPEDLLKQHL (85 aa). The disordered stretch occupies residues 87-110; that stretch reads PPPPEDLLKQHLSSVGQNTSPADR. Polar residues predominate over residues 97-110; it reads HLSSVGQNTSPADR.

The sequence is that of Protein YcgL from Salmonella choleraesuis (strain SC-B67).